Reading from the N-terminus, the 284-residue chain is UPF0294 protein VV1_1880 (284 aa).

Belongs to the UPF0294 family.

It is found in the cytoplasm. This chain is UPF0294 protein VV1_1880, found in Vibrio vulnificus (strain CMCP6).